A 286-amino-acid chain; its full sequence is Beta-lactamase SHV-13 (286 aa).

The first 21 residues, 1–21 (MRYIRLCIISLLATLPLAVHA), serve as a signal peptide directing secretion. The active-site Acyl-ester intermediate is Ser66. The cysteines at positions 73 and 119 are disulfide-linked. Glu164 serves as the catalytic Proton acceptor. 230 to 232 (KTG) provides a ligand contact to substrate.

The protein belongs to the class-A beta-lactamase family.

The catalysed reaction is a beta-lactam + H2O = a substituted beta-amino acid. With respect to regulation, inhibited 16-fold better by the beta-lactamase inhibitor clavulanic acid than by tazobactam. Functionally, broad spectrum beta-lactamase which hydrolyzes penicillins, as well as cephalosporins except cephamycins. Also hydrolyzes aztreonam, but not imipenem. Confers highly resistance to ceftazidime, cefotaxime, aztreonam and piperacillin. This chain is Beta-lactamase SHV-13 (bla), found in Klebsiella pneumoniae.